A 657-amino-acid chain; its full sequence is MTQLAIGKPAPLGAHYDGQGVNFTLFSVHAERVELCVFDANGQEHRYDLPGHSGDIWHGYLPDARPGLRYGYRVHGPWQPAEGHRFNPAKLLIDPCARQIDGEFKDNPLLHAGHNEPDYRDNAAIAPKCVVVVDHYDWEDDAPPRTPWGSTIIYEAHVKGLTYLHPEIPVEIRGTYKALGHPVMINYLKQLGITALELLPVAQFASEPRLQRMGLSNYWGYNPVAMFALHPAYACSPETALDEFRDAIKALHKAGIEVILDIVLNHSAELDLDGPLFSLRGIDNRSYYWIREDGDYHNWTGCGNTLNLSHPAVVDYASACLRYWVETCHVDGFRFDLAAVMGRTPEFRQDAPLFTAIQNCPVLSQVKLIAEPWDIAPGGYQVGNFPPLFAEWNDHFRDAARRFWLHYDLPLGAFAGRFAASSDVFKRNGRLPSAAINLVTAHDGFTLRDCVCFNHKHNEANGEENRDGTNNNYSNNHGKEGLGGTLDLVERRRDSIHALLTTLLLSQGTPMLLAGDEHGHSQHGNNNAYCQDNQLTWLDWSQASSGLTAFTAALIHLRKRIPALVENRWWEEGDGNVRWLNRYAQPLSTDEWQNGPKQLQILLSDRFLIAINATLEVTEIVLPAGEWHAIPPFAGEDNPVITAVWQGPAHGLCVFQR.

The active-site Nucleophile is the Asp336. The active-site Proton donor is Glu371. The segment at Ala460–Lys479 is disordered.

It belongs to the glycosyl hydrolase 13 family.

It carries out the reaction Hydrolysis of (1-&gt;6)-alpha-D-glucosidic linkages to branches with degrees of polymerization of three or four glucose residues in limit dextrin.. The protein operates within glycan degradation; glycogen degradation. Removes maltotriose and maltotetraose chains that are attached by 1,6-alpha-linkage to the limit dextrin main chain, generating a debranched limit dextrin. The polypeptide is Glycogen debranching enzyme (Escherichia coli O9:H4 (strain HS)).